Reading from the N-terminus, the 554-residue chain is 3-(3-hydroxy-phenyl)propionate/3-hydroxycinnamic acid hydroxylase (554 aa).

FAD-binding positions include 17-46 (QVAI…VVEK) and 285-295 (FRIDRVLLAGD).

Belongs to the PheA/TfdB FAD monooxygenase family. It depends on FAD as a cofactor.

It catalyses the reaction 3-(3-hydroxyphenyl)propanoate + NADH + O2 + H(+) = 3-(2,3-dihydroxyphenyl)propanoate + NAD(+) + H2O. The enzyme catalyses (2E)-3-(3-hydroxyphenyl)prop-2-enoate + NADH + O2 + H(+) = (2E)-3-(2,3-dihydroxyphenyl)prop-2-enoate + NAD(+) + H2O. It functions in the pathway aromatic compound metabolism; 3-phenylpropanoate degradation. In terms of biological role, catalyzes the insertion of one atom of molecular oxygen into position 2 of the phenyl ring of 3-(3-hydroxyphenyl)propionate (3-HPP) and hydroxycinnamic acid (3HCI). The polypeptide is 3-(3-hydroxy-phenyl)propionate/3-hydroxycinnamic acid hydroxylase (Escherichia coli O81 (strain ED1a)).